The primary structure comprises 381 residues: Gustatory and pheromone receptor 39a, isoform D (381 aa).

The Cytoplasmic segment spans residues 1–43 (MKRNAFEELRVQLRTLKWLGVLRFTIDFNKCLVRENASEERSA). Residues 44–64 (WLYLIGVVGITCSLIVYSTYF) form a helical membrane-spanning segment. Residues 65–78 (PSHFIMGKHNTTGN) are Extracellular-facing. N-linked (GlcNAc...) asparagine glycosylation occurs at asparagine 74. Residues 79 to 101 (CYALINIRSCSIVTMLIYTQLYI) form a helical membrane-spanning segment. Over 102–128 (QRFRFVALLQSILRFNQISGSHREEGR) the chain is Cytoplasmic. The helical transmembrane segment at 129–149 (FAFYYYTHLSLLIICMLNYAY) threads the bilayer. Over 150-172 (GYWTAGVRLTTIPIYLLQYGFSY) the chain is Extracellular. Residues 173-193 (LFLGQVVVLFACIQQILLSIL) form a helical membrane-spanning segment. At 194–234 (KYYNQVVLKNIKSSKESREFYYNFCKYNQVIWLSYTEINHC) the chain is on the cytoplasmic side. Residues 235–255 (FGLLLLLVTGLILLITPSGPF) traverse the membrane as a helical segment. At 256–273 (YLVSTIFEGRFRQNWQFS) the chain is on the extracellular side. A helical membrane pass occupies residues 274 to 294 (LMSFTAILWSLPWIVLLVLAM). Topologically, residues 295–350 (GRNDVQKEANKTAKMLTKVPRTGTGLDRMIEKFLLKNLRQKPILTAYGFFALDKST) are cytoplasmic. A helical membrane pass occupies residues 351–371 (LFKLFTAIFTYMVILVQFKEM). Residues 372–381 (ENSTKSINKF) lie on the Extracellular side of the membrane. N-linked (GlcNAc...) asparagine glycosylation is present at asparagine 373.

Belongs to the insect chemoreceptor superfamily. Gustatory receptor (GR) family. Gr21a subfamily. Expressed in the adult labellar chemosensory neurons and adult thorax and abdomen.

It is found in the cell membrane. Gustatory receptor which mediates acceptance or avoidance behavior, depending on its substrates. Plays a role in sustaining courtship behavior in males, possibly through the reception of a stimulating arrestant pheromone. The protein is Gustatory and pheromone receptor 39a, isoform D (Gr39a) of Drosophila melanogaster (Fruit fly).